Consider the following 131-residue polypeptide: UPF0102 protein YraN (131 aa).

This sequence belongs to the UPF0102 family.

The polypeptide is UPF0102 protein YraN (Salmonella typhimurium (strain LT2 / SGSC1412 / ATCC 700720)).